A 645-amino-acid polypeptide reads, in one-letter code: 1,4-alpha-glucan branching enzyme GlgB (645 aa).

D309 functions as the Nucleophile in the catalytic mechanism. The Proton donor role is filled by E352. The interval 621 to 645 (MRKGSKKQDGKKAELRSNATSRRKR) is disordered. Residues 626-635 (KKQDGKKAEL) are compositionally biased toward basic and acidic residues.

This sequence belongs to the glycosyl hydrolase 13 family. GlgB subfamily. In terms of assembly, monomer.

It carries out the reaction Transfers a segment of a (1-&gt;4)-alpha-D-glucan chain to a primary hydroxy group in a similar glucan chain.. It participates in glycan biosynthesis; glycogen biosynthesis. Functionally, catalyzes the formation of the alpha-1,6-glucosidic linkages in glycogen by scission of a 1,4-alpha-linked oligosaccharide from growing alpha-1,4-glucan chains and the subsequent attachment of the oligosaccharide to the alpha-1,6 position. This is 1,4-alpha-glucan branching enzyme GlgB from Bacillus cytotoxicus (strain DSM 22905 / CIP 110041 / 391-98 / NVH 391-98).